The chain runs to 571 residues: MKLTRAQHASLYGPTVGDKVRLADTDLLLEIEKDYTVYGDECKFGGGKVLRDGMGQSAVYTRDEGVLDLIITNATIIDYTGIVKADIGIKDGHIVGIGKGGNPDIMDGVESHMIVGASTEAIAGEGLIVTAGGIDAHIHFISPQQIDVAIASGITTMLGGGTGPATGTKATTCTPGKWNIERMLEAADAFPVNLGFLGKGNASTPAPLREQIEAGAIGLKLHEDWGTTPAAIRTCLSVADRMDVQVAIHTDTLNEAGFVEDTIKAIGDRVIHTYHTEGAGGGHAPDIMKVAGLPNVLPSSTNPTRPFTVNTIDEHLDMLMVCHHLDPNVPEDVAFADSRIRPETIAAEDILQDLGVISMISSDSQAMGRVGEVIIRTWQTADKMKKQRGALAEDQGKGNDNVRIKRYVSKYTINPAITHGIDDYVGSVEVGKLADLVLWDPRFFGVKPELILKGGLIAYSQMGDPNASIPTPQPVFSRPMFGSFGRARGTTSITFLSKAAMDLGVHEALGLQKKIAHVKNCRSISKRSMKYNDATPNIEIDPETYEVKVDGEMITCKPFEEVALAQRYFLF.

Positions 132-571 (GGIDAHIHFI…VALAQRYFLF (440 aa)) constitute a Urease domain. Positions 137, 139, and 220 each coordinate Ni(2+). Position 220 is an N6-carboxylysine (K220). H222 provides a ligand contact to substrate. The Ni(2+) site is built by H249 and H275. Residue H323 is the Proton donor of the active site. D363 provides a ligand contact to Ni(2+).

Belongs to the metallo-dependent hydrolases superfamily. Urease alpha subunit family. In terms of assembly, heterotrimer of UreA (gamma), UreB (beta) and UreC (alpha) subunits. Three heterotrimers associate to form the active enzyme. Ni cation serves as cofactor. Post-translationally, carboxylation allows a single lysine to coordinate two nickel ions.

It is found in the cytoplasm. The catalysed reaction is urea + 2 H2O + H(+) = hydrogencarbonate + 2 NH4(+). Its pathway is nitrogen metabolism; urea degradation; CO(2) and NH(3) from urea (urease route): step 1/1. The protein is Urease subunit alpha of Halalkalibacterium halodurans (strain ATCC BAA-125 / DSM 18197 / FERM 7344 / JCM 9153 / C-125) (Bacillus halodurans).